Reading from the N-terminus, the 86-residue chain is High affinity immunoglobulin epsilon receptor subunit gamma (86 aa).

A signal peptide spans 1 to 18 (MIPAVVLLLLLLVEQAAA). At 19-23 (LGEPQ) the chain is on the extracellular side. Residues 24–44 (LCYILDAILFLYGIVLTLLYC) form a helical membrane-spanning segment. Residues 45–86 (RLKIQVRKAAIASYEKSDGVYTGLSTRNQETYETLKHEKPPQ) lie on the Cytoplasmic side of the membrane. Residues 54–82 (AIASYEKSDGVYTGLSTRNQETYETLKHE) form the ITAM domain. Tyr65 carries the phosphotyrosine modification. Ser69 carries the phosphoserine modification. The residue at position 76 (Tyr76) is a Phosphotyrosine. Thr78 is modified (phosphothreonine).

The protein belongs to the CD3Z/FCER1G family. As to quaternary structure, igE Fc receptor is a tetramer of an alpha chain, a beta chain, and two disulfide linked gamma chains. Associates with FCGR1A; forms a functional signaling complex. The signaling subunit of immunoglobulin gamma (IgG) Fc receptor complex. As a homodimer or a heterodimer of CD247 and FCER1G, associates with the ligand binding subunit FCGR3A to form a functional receptor complex. Associates with CLEC6A. Interacts with CLEC4E. Interacts (via ITAM domain) with SYK (via SH2 domains); activates SYK, enabling integrin-mediated activation of neutrophils and macrophages. Interacts with CSF2RB and recruits SYK in response to IL3 stimulation; this interaction is direct. Interacts with CD300LH; the interaction may be indirect. Interacts with CD300LD. Interacts with TARM1.

The protein localises to the cell membrane. In terms of biological role, adapter protein containing an immunoreceptor tyrosine-based activation motif (ITAM) that transduces activation signals from various immunoreceptors. As a component of the high-affinity immunoglobulin E (IgE) receptor, mediates allergic inflammatory signaling in mast cells. As a constitutive component of interleukin-3 receptor complex, selectively mediates interleukin 4/IL4 production by basophils priming T-cells toward effector T-helper 2 subset. Associates with pattern recognition receptors CLEC4D and CLEC4E to form a functional signaling complex in myeloid cells. Binding of mycobacterial trehalose 6,6'-dimycolate (TDM) to this receptor complex leads to phosphorylation of ITAM, triggering activation of SYK, CARD9 and NF-kappa-B, consequently driving maturation of antigen-presenting cells and shaping antigen-specific priming of T-cells toward effector T-helper 1 and T-helper 17 cell subtypes. May function cooperatively with other activating receptors. Functionally linked to integrin beta-2/ITGB2-mediated neutrophil activation. Also involved in integrin alpha-2/ITGA2-mediated platelet activation. The chain is High affinity immunoglobulin epsilon receptor subunit gamma (FCER1G) from Macaca fascicularis (Crab-eating macaque).